Reading from the N-terminus, the 615-residue chain is Mitogen-activated protein kinase 18 (615 aa).

Residues 25–316 (YRILEVIGKG…PAEALADPYF (292 aa)) enclose the Protein kinase domain. Residues 31-39 (IGKGSYGVV) and Lys-54 contribute to the ATP site. Asp-151 (proton acceptor) is an active-site residue. Thr-187 bears the Phosphothreonine mark. A TXY motif is present at residues 187–189 (TDY). Tyr-189 carries the post-translational modification Phosphotyrosine. At Thr-192 the chain carries Phosphothreonine. Disordered stretches follow at residues 414 to 483 (RSTV…ESSV) and 510 to 544 (NTMT…PPAA). Residues 415–426 (STVHSTVVHSTS) are compositionally biased toward low complexity. Positions 445 to 459 (NGASSAGHPSTSAYP) are enriched in polar residues. Pro residues predominate over residues 464–473 (GPPPRVPPSG). 2 stretches are compositionally biased toward polar residues: residues 510–522 (NTMT…NIEA) and 532–544 (PVHQ…PPAA).

The protein belongs to the protein kinase superfamily. CMGC Ser/Thr protein kinase family. MAP kinase subfamily. As to quaternary structure, interacts with PHS1. Binds to MAPKKK20. In terms of processing, dually phosphorylated on Thr-187 and Tyr-189, which activates the enzyme. Phosphorylated by MAPKKK20. Expressed in roots, seedlings, leaves, flower buds, flowers and siliques.

It is found in the nucleus. Its subcellular location is the cytoplasm. The enzyme catalyses L-seryl-[protein] + ATP = O-phospho-L-seryl-[protein] + ADP + H(+). It carries out the reaction L-threonyl-[protein] + ATP = O-phospho-L-threonyl-[protein] + ADP + H(+). With respect to regulation, activated by threonine and tyrosine phosphorylation. Inactivated by phosphatase PHS1. Mitogen-activated protein kinase (MAPK) that is specifically regulated by PHS1 and MAPKKK20 and mediates signaling that regulates cortical microtubule functions, maybe through regulation of microtubule dynamic instability. This chain is Mitogen-activated protein kinase 18, found in Arabidopsis thaliana (Mouse-ear cress).